The chain runs to 387 residues: Succinate--CoA ligase [ADP-forming] subunit beta (387 aa).

The ATP-grasp domain maps to 9-236 (RDLFEKYGVP…KAAADPLEAK (228 aa)). ATP contacts are provided by residues lysine 45, 52–54 (GRG), alanine 94, and glutamate 99. Mg(2+) contacts are provided by asparagine 191 and aspartate 205. Residues asparagine 256 and 318–320 (GIT) contribute to the substrate site.

The protein belongs to the succinate/malate CoA ligase beta subunit family. Heterotetramer of two alpha and two beta subunits. The cofactor is Mg(2+).

It catalyses the reaction succinate + ATP + CoA = succinyl-CoA + ADP + phosphate. It carries out the reaction GTP + succinate + CoA = succinyl-CoA + GDP + phosphate. Its pathway is carbohydrate metabolism; tricarboxylic acid cycle; succinate from succinyl-CoA (ligase route): step 1/1. Functionally, succinyl-CoA synthetase functions in the citric acid cycle (TCA), coupling the hydrolysis of succinyl-CoA to the synthesis of either ATP or GTP and thus represents the only step of substrate-level phosphorylation in the TCA. The beta subunit provides nucleotide specificity of the enzyme and binds the substrate succinate, while the binding sites for coenzyme A and phosphate are found in the alpha subunit. This chain is Succinate--CoA ligase [ADP-forming] subunit beta, found in Leifsonia xyli subsp. xyli (strain CTCB07).